We begin with the raw amino-acid sequence, 317 residues long: Protein PXR1 (317 aa).

In terms of domain architecture, G-patch spans 25–79; it reads TTGYGHRIMSAQGWTPGAFLGAPGAAHSSCYTAASASHIRVVLKDDTLGLGARPR. A disordered region spans residues 152–268; sequence EQANKDDSSD…PNKQSAQQST (117 aa). The segment covering 154–170 has biased composition (basic and acidic residues); sequence ANKDDSSDPKSRQETTQ. Residues 171 to 182 show a composition bias toward basic residues; that stretch reads KRPKKEKRKEKS. Residues 192–219 show a composition bias toward polar residues; that stretch reads RSISSKPERGTINSANQTSDDESTNIVP. The segment covering 224–236 has biased composition (basic residues); it reads SRKKEKKKKSKKR.

This sequence belongs to the PINX1 family.

It localises to the nucleus. It is found in the nucleolus. In terms of biological role, involved in rRNA-processing at A0, A1 and A2 sites and negatively regulates telomerase. The sequence is that of Protein PXR1 (PXR1) from Coccidioides immitis (strain RS) (Valley fever fungus).